Consider the following 55-residue polypeptide: TQGNTCGGETCSAAQVCLKGKCVCNEVHCRIRCKYGLKKDENGCEYPCSCAKASQ.

Cystine bridges form between Cys6/Cys17, Cys11/Cys22, Cys24/Cys44, Cys29/Cys48, and Cys33/Cys50. The Antistasin-like domain occupies 24-50 (CNEVHCRIRCKYGLKKDENGCEYPCSC).

The protein belongs to the protease inhibitor I15 (antistasin) family.

It is found in the secreted. Functionally, acts as an inhibitor of tissue kallikrein, trypsin, chymotrypsin and neutrophil cathepsin G. This chain is Hirustasin, found in Hirudo medicinalis (Medicinal leech).